The sequence spans 114 residues: Probable 4-amino-4-deoxy-L-arabinose-phosphoundecaprenol flippase subunit ArnE (114 aa).

The EamA domain occupies 39–112 (RSPWLWLALF…VIGGVALLGQ (74 aa)). 3 helical membrane-spanning segments follow: residues 41–61 (PWLW…LLVL), 64–84 (LPVS…TLIA), and 91–111 (PVDV…ALLG).

This sequence belongs to the ArnE family. As to quaternary structure, heterodimer of ArnE and ArnF.

Its subcellular location is the cell inner membrane. Its pathway is bacterial outer membrane biogenesis; lipopolysaccharide biosynthesis. Functionally, translocates 4-amino-4-deoxy-L-arabinose-phosphoundecaprenol (alpha-L-Ara4N-phosphoundecaprenol) from the cytoplasmic to the periplasmic side of the inner membrane. The chain is Probable 4-amino-4-deoxy-L-arabinose-phosphoundecaprenol flippase subunit ArnE from Pseudomonas fluorescens (strain Pf0-1).